A 210-amino-acid polypeptide reads, in one-letter code: ATP-dependent Clp protease proteolytic subunit (210 aa).

The active-site Nucleophile is the S106. The active site involves H131.

Belongs to the peptidase S14 family. In terms of assembly, fourteen ClpP subunits assemble into 2 heptameric rings which stack back to back to give a disk-like structure with a central cavity, resembling the structure of eukaryotic proteasomes.

The protein localises to the cytoplasm. It carries out the reaction Hydrolysis of proteins to small peptides in the presence of ATP and magnesium. alpha-casein is the usual test substrate. In the absence of ATP, only oligopeptides shorter than five residues are hydrolyzed (such as succinyl-Leu-Tyr-|-NHMec, and Leu-Tyr-Leu-|-Tyr-Trp, in which cleavage of the -Tyr-|-Leu- and -Tyr-|-Trp bonds also occurs).. Cleaves peptides in various proteins in a process that requires ATP hydrolysis. Has a chymotrypsin-like activity. Plays a major role in the degradation of misfolded proteins. This Bartonella henselae (strain ATCC 49882 / DSM 28221 / CCUG 30454 / Houston 1) (Rochalimaea henselae) protein is ATP-dependent Clp protease proteolytic subunit.